We begin with the raw amino-acid sequence, 218 residues long: Phosphoenolpyruvate guanylyltransferase (218 aa).

Residues Thr-151, Gly-166, and Ser-169 each contribute to the phosphoenolpyruvate site.

This sequence belongs to the CofC family.

It catalyses the reaction phosphoenolpyruvate + GTP + H(+) = enolpyruvoyl-2-diphospho-5'-guanosine + diphosphate. Its pathway is cofactor biosynthesis; coenzyme F420 biosynthesis. Guanylyltransferase that catalyzes the activation of phosphoenolpyruvate (PEP) as enolpyruvoyl-2-diphospho-5'-guanosine, via the condensation of PEP with GTP. It is involved in the biosynthesis of coenzyme F420, a hydride carrier cofactor. The sequence is that of Phosphoenolpyruvate guanylyltransferase from Mycobacterium sp. (strain KMS).